Consider the following 504-residue polypeptide: Probable cytosol aminopeptidase (504 aa).

Lysine 263 and aspartate 268 together coordinate Mn(2+). Lysine 275 is an active-site residue. The Mn(2+) site is built by aspartate 286, aspartate 345, and glutamate 347. Residue arginine 349 is part of the active site.

Belongs to the peptidase M17 family. The cofactor is Mn(2+).

The protein localises to the cytoplasm. The enzyme catalyses Release of an N-terminal amino acid, Xaa-|-Yaa-, in which Xaa is preferably Leu, but may be other amino acids including Pro although not Arg or Lys, and Yaa may be Pro. Amino acid amides and methyl esters are also readily hydrolyzed, but rates on arylamides are exceedingly low.. It carries out the reaction Release of an N-terminal amino acid, preferentially leucine, but not glutamic or aspartic acids.. Its function is as follows. Presumably involved in the processing and regular turnover of intracellular proteins. Catalyzes the removal of unsubstituted N-terminal amino acids from various peptides. The protein is Probable cytosol aminopeptidase of Sulfurihydrogenibium sp. (strain YO3AOP1).